The chain runs to 368 residues: tRNA-specific 2-thiouridylase MnmA (368 aa).

ATP is bound by residues glycine 11–serine 18 and methionine 37. The interval asparagine 97 to aspartate 99 is interaction with target base in tRNA. The active-site Nucleophile is cysteine 102. The cysteines at positions 102 and 199 are disulfide-linked. Residue glycine 127 participates in ATP binding. Residues lysine 149–glutamine 151 form an interaction with tRNA region. Cysteine 199 acts as the Cysteine persulfide intermediate in catalysis. Residues arginine 311–tyrosine 312 are interaction with tRNA.

The protein belongs to the MnmA/TRMU family. As to quaternary structure, interacts with TusE.

It is found in the cytoplasm. It catalyses the reaction S-sulfanyl-L-cysteinyl-[protein] + uridine(34) in tRNA + AH2 + ATP = 2-thiouridine(34) in tRNA + L-cysteinyl-[protein] + A + AMP + diphosphate + H(+). Its function is as follows. Catalyzes the 2-thiolation of uridine at the wobble position (U34) of tRNA(Lys), tRNA(Glu) and tRNA(Gln), leading to the formation of s(2)U34, the first step of tRNA-mnm(5)s(2)U34 synthesis. Sulfur is provided by IscS, via a sulfur-relay system. Binds ATP and its substrate tRNAs. In Salmonella paratyphi B (strain ATCC BAA-1250 / SPB7), this protein is tRNA-specific 2-thiouridylase MnmA.